A 264-amino-acid polypeptide reads, in one-letter code: GATA transcription factor 2 (264 aa).

Positions 29 to 42 (SSSGGSTAATSSSS) are enriched in low complexity. Disordered stretches follow at residues 29 to 57 (SSSG…HHLP) and 96 to 192 (NPLG…TPQW). Polar residues predominate over residues 101–110 (TMTSVKTETS). Residues 114–121 (KPRSKRSR) carry the Nuclear localization signal motif. A compositionally biased stretch (gly residues) spans 155–164 (SGGGGGGGGR). A GATA-type zinc finger spans residues 175 to 229 (GGGMRRCTHCASEKTPQWRTGPLGPKTLCNACGVRFKSGRLVPEYRPASSPTFVL).

Belongs to the type IV zinc-finger family. Class A subfamily. Mostly expressed in roots. Also expressed in flowers and leaves, and to a lower extent in stems.

It is found in the nucleus. In terms of biological role, transcriptional activator that specifically binds 5'-GATA-3' or 5'-GAT-3' motifs within gene promoters. May be involved in the regulation of some light-responsive genes. The protein is GATA transcription factor 2 (GATA2) of Arabidopsis thaliana (Mouse-ear cress).